The sequence spans 338 residues: Anthranilate phosphoribosyltransferase (338 aa).

Residues Gly-81, Gly-84–Asp-85, Thr-89, Asn-91–Thr-94, Lys-109–Ser-117, and Ala-121 each bind 5-phospho-alpha-D-ribose 1-diphosphate. Gly-81 is a binding site for anthranilate. Position 93 (Ser-93) interacts with Mg(2+). Asn-112 contacts anthranilate. An anthranilate-binding site is contributed by Arg-167. Residues Asp-225 and Glu-226 each coordinate Mg(2+).

This sequence belongs to the anthranilate phosphoribosyltransferase family. In terms of assembly, homodimer. The cofactor is Mg(2+).

The enzyme catalyses N-(5-phospho-beta-D-ribosyl)anthranilate + diphosphate = 5-phospho-alpha-D-ribose 1-diphosphate + anthranilate. It functions in the pathway amino-acid biosynthesis; L-tryptophan biosynthesis; L-tryptophan from chorismate: step 2/5. Catalyzes the transfer of the phosphoribosyl group of 5-phosphorylribose-1-pyrophosphate (PRPP) to anthranilate to yield N-(5'-phosphoribosyl)-anthranilate (PRA). This chain is Anthranilate phosphoribosyltransferase, found in Rhizobium etli (strain ATCC 51251 / DSM 11541 / JCM 21823 / NBRC 15573 / CFN 42).